Here is a 585-residue protein sequence, read N- to C-terminus: MYALLSVYDKTGLLELAKALTSKGVKLLGSGGTAKMIRESGMEVADVSSITNAPEILGGRVKTLHPAVHGGILARDIPSDEKDLVEQSIEKIDIVVCNLYPFRETIAKPNVTIPEAVEEIDIGGVTLLRAAAKNHARVTILSDPADYATFTDKFLSDKLTQDDRNTYALKAFASTASYDAAITDYFRKQYAAGVDQLTLRYGANPHQSPAQAFMEQGPLPFKVLCGSPGYINLMDALNSWPLVKELRENIGIPAAASFKHVSPAGAAVGLPLSDVEKKVYFVSDITEFTPLACAYARARGADRMSSFGDFIALSDTVDVCTARIISREVSDGVIAPGYEPEALELLKKKKGGKYCVLQMDPKYVPAEIETRQVYGISLQQHRNHAKIDFSLFEKVVSKNKDLPKSALIDLVIATTALKYTQSNSVCYAKNGMVVGLGAGQQSRIHCNRLAGDKADNWWLRHHPKVLGMQFKKSAKRPEKSNAIDLYVLDAVPAEGSEREQWESAFETIPEPLTKKEREEFLATCKDVVCASDAFFPFPDNIYRLAQSGVKYVAAPGGSVMDQAVRDTANEFNMVFSEIPLRLFHH.

The 142-residue stretch at Met-1–Ser-142 folds into the MGS-like domain. IMP-binding positions include Ser-30–Thr-33, Arg-60–Thr-63, Cys-97–Asn-98, and Asp-121–Ile-122. Lys-133 serves as the catalytic Proton donor/acceptor; for FAICAR cyclization activity. Residues Arg-200–Tyr-201, His-260, Gly-308, Asp-331, Asn-423, and Arg-443 each bind 5-amino-1-(5-phospho-beta-D-ribosyl)imidazole-4-carboxamide. Catalysis depends on His-260, which acts as the Proton acceptor; for AICAR formyltransferase activity. Ile-444 lines the (6R)-10-formyltetrahydrofolate pocket. Residue Phe-534 coordinates 5-amino-1-(5-phospho-beta-D-ribosyl)imidazole-4-carboxamide. Residues Asp-539 and Ser-558–Val-559 contribute to the (6R)-10-formyltetrahydrofolate site. 5-amino-1-(5-phospho-beta-D-ribosyl)imidazole-4-carboxamide is bound at residue Arg-581.

It belongs to the PurH family. As to quaternary structure, homodimer.

It is found in the cytoplasm. Its subcellular location is the cytosol. The enzyme catalyses (6R)-10-formyltetrahydrofolate + 5-amino-1-(5-phospho-beta-D-ribosyl)imidazole-4-carboxamide = 5-formamido-1-(5-phospho-D-ribosyl)imidazole-4-carboxamide + (6S)-5,6,7,8-tetrahydrofolate. The catalysed reaction is IMP + H2O = 5-formamido-1-(5-phospho-D-ribosyl)imidazole-4-carboxamide. The protein operates within purine metabolism; IMP biosynthesis via de novo pathway; 5-formamido-1-(5-phospho-D-ribosyl)imidazole-4-carboxamide from 5-amino-1-(5-phospho-D-ribosyl)imidazole-4-carboxamide (10-formyl THF route): step 1/1. It participates in purine metabolism; IMP biosynthesis via de novo pathway; IMP from 5-formamido-1-(5-phospho-D-ribosyl)imidazole-4-carboxamide: step 1/1. Its function is as follows. Bifunctional enzyme that catalyzes the last two steps of purine biosynthesis. Acts as a transformylase that incorporates a formyl group to the AMP analog AICAR (5-amino-1-(5-phospho-beta-D-ribosyl)imidazole-4-carboxamide) to produce the intermediate formyl-AICAR (FAICAR). Also catalyzes the cyclization of FAICAR to IMP. The sequence is that of Bifunctional purine biosynthesis protein ade10 (ade10) from Schizosaccharomyces pombe (strain 972 / ATCC 24843) (Fission yeast).